The following is a 244-amino-acid chain: tRNA (guanine-N(7)-)-methyltransferase (244 aa).

A compositionally biased stretch (pro residues) spans Met-1–Leu-11. The tract at residues Met-1 to Arg-23 is disordered. S-adenosyl-L-methionine is bound by residues Glu-74, Glu-99, Asp-126, and Asp-149. Residue Asp-149 is part of the active site. Residues Lys-153, Asp-185, and Thr-222–Glu-225 contribute to the substrate site.

This sequence belongs to the class I-like SAM-binding methyltransferase superfamily. TrmB family.

It catalyses the reaction guanosine(46) in tRNA + S-adenosyl-L-methionine = N(7)-methylguanosine(46) in tRNA + S-adenosyl-L-homocysteine. The protein operates within tRNA modification; N(7)-methylguanine-tRNA biosynthesis. Catalyzes the formation of N(7)-methylguanine at position 46 (m7G46) in tRNA. The sequence is that of tRNA (guanine-N(7)-)-methyltransferase from Pseudomonas syringae pv. tomato (strain ATCC BAA-871 / DC3000).